Reading from the N-terminus, the 397-residue chain is Cathepsin E (397 aa).

Positions 1–20 (MKPLLVLLLLLLLDLAQAQG) are cleaved as a signal peptide. Residues 21 to 59 (ALHRVPLRRHQSLRKKLRAQGQLSEFWRSHNLDMTRLSE) constitute a propeptide, activation peptide. Residues 79–393 (YFGTISIGTP…DRGNNQVGLA (315 aa)) form the Peptidase A1 domain. A glycan (N-linked (GlcNAc...) asparagine) is linked at Asn-91. Residue Asp-97 is part of the active site. Intrachain disulfides connect Cys-110–Cys-115 and Cys-273–Cys-277. Residue Asp-282 is part of the active site. An N-linked (GlcNAc...) asparagine glycan is attached at Asn-323.

Belongs to the peptidase A1 family. As to quaternary structure, homodimer; disulfide-linked. In terms of processing, glycosylated. The nature of the carbohydrate chain varies between cell types. In fibroblasts, the proenzyme contains a high mannose-type oligosaccharide, while the mature enzyme contains a complex-type oligosaccharide. Expressed abundantly in the stomach, club cells and alveolar macrophages of the lung, brain microglia, spleen and activated B-lymphocytes. Not expressed in resting B-lymphocytes.

It is found in the endosome. The enzyme catalyses Similar to cathepsin D, but slightly broader specificity.. Its function is as follows. May have a role in immune function. Probably involved in the processing of antigenic peptides during MHC class II-mediated antigen presentation. May play a role in activation-induced lymphocyte depletion in the thymus, and in neuronal degeneration and glial cell activation in the brain. The sequence is that of Cathepsin E (Ctse) from Mus musculus (Mouse).